The following is a 448-amino-acid chain: MRSCLSIVLAAGEGTRMKSSLPKVLHKIAGLPLVCHVIKQIELAGASQLAVVVGAGAQDVTHVVQSFIKSVMIFEQKERLGTAHAVLSARLALQKEVDDVLIVFGDTPLIKQDSLLKVREQLAVGADVVVAGFYASDPTGYGRLLEKNGKLIAIVEEKDASDEEKKISFCNGGILALNGKRALSLLEKVNNYNSKQEYYLTDIVSIASREGLEVQVVEVPFDNIVGINNCFELFEADSLWQKRKARDLMLSGVTILKPETVYFSYDTEIEQGVVIEPNVYFGLGVKVQSGAVIHAFSYLEGAVVGIDAQIGPYAHLRPGTELARSVKIGNFCEVKKAKIGEASKINHLSYIGDAEIGAQTNIGAGTITCNYDGFHKYKIVIGDHAFIGSNSALVSPLMIGNGSYIASGSVITEDVPINSMAFGRARQVTKKDYAAKLRVRLSGNQQKK.

The segment at 1–230 (MRSCLSIVLA…FDNIVGINNC (230 aa)) is pyrophosphorylase. Residues 9–12 (LAAG), Lys23, Gln76, and 81–82 (GT) each bind UDP-N-acetyl-alpha-D-glucosamine. Asp106 serves as a coordination point for Mg(2+). UDP-N-acetyl-alpha-D-glucosamine is bound by residues Gly142, Glu156, Asn171, and Asn228. Asn228 is a Mg(2+) binding site. A linker region spans residues 231–251 (FELFEADSLWQKRKARDLMLS). Residues 252-448 (GVTILKPETV…VRLSGNQQKK (197 aa)) form an N-acetyltransferase region. Positions 317 and 335 each coordinate UDP-N-acetyl-alpha-D-glucosamine. His347 serves as the catalytic Proton acceptor. Tyr350 and Asn361 together coordinate UDP-N-acetyl-alpha-D-glucosamine. Acetyl-CoA contacts are provided by residues Ala364, 370–371 (NY), Ser389, Ser407, and Arg424.

The protein in the N-terminal section; belongs to the N-acetylglucosamine-1-phosphate uridyltransferase family. In the C-terminal section; belongs to the transferase hexapeptide repeat family. In terms of assembly, homotrimer. It depends on Mg(2+) as a cofactor.

It localises to the cytoplasm. The enzyme catalyses alpha-D-glucosamine 1-phosphate + acetyl-CoA = N-acetyl-alpha-D-glucosamine 1-phosphate + CoA + H(+). It carries out the reaction N-acetyl-alpha-D-glucosamine 1-phosphate + UTP + H(+) = UDP-N-acetyl-alpha-D-glucosamine + diphosphate. Its pathway is nucleotide-sugar biosynthesis; UDP-N-acetyl-alpha-D-glucosamine biosynthesis; N-acetyl-alpha-D-glucosamine 1-phosphate from alpha-D-glucosamine 6-phosphate (route II): step 2/2. It participates in nucleotide-sugar biosynthesis; UDP-N-acetyl-alpha-D-glucosamine biosynthesis; UDP-N-acetyl-alpha-D-glucosamine from N-acetyl-alpha-D-glucosamine 1-phosphate: step 1/1. It functions in the pathway bacterial outer membrane biogenesis; LPS lipid A biosynthesis. Catalyzes the last two sequential reactions in the de novo biosynthetic pathway for UDP-N-acetylglucosamine (UDP-GlcNAc). The C-terminal domain catalyzes the transfer of acetyl group from acetyl coenzyme A to glucosamine-1-phosphate (GlcN-1-P) to produce N-acetylglucosamine-1-phosphate (GlcNAc-1-P), which is converted into UDP-GlcNAc by the transfer of uridine 5-monophosphate (from uridine 5-triphosphate), a reaction catalyzed by the N-terminal domain. The polypeptide is Bifunctional protein GlmU (Bartonella quintana (strain Toulouse) (Rochalimaea quintana)).